The primary structure comprises 137 residues: MNTEMYQTPMEVAVYQLHNFSISFFSSLLGGDVVSVKLDNSASGASVVALDNKIEQAMDLVKNHLMYAVREEVEVLKEQIRELLEKNSQLERENTLLKTLASPEQLEKFQSRLSPEEPAPEAPETPETPEAPGGSAV.

The tract at residues 1-60 (MNTEMYQTPMEVAVYQLHNFSISFFSSLLGGDVVSVKLDNSASGASVVALDNKIEQAMDL) is AP1-binding. A phosphoserine mark is found at Asn-40 and Val-73. The interval 76–97 (LKEQIRELLEKNSQLERENTLL) is leucine-zipper. The interval 101 to 137 (ASPEQLEKFQSRLSPEEPAPEAPETPETPEAPGGSAV) is disordered. A Phosphoserine modification is found at Ser-102. 2 positions are modified to phosphothreonine: Thr-125 and Thr-128. Residues 128-137 (TPEAPGGSAV) show a composition bias toward low complexity.

Belongs to the TSC-22/Dip/Bun family. Can form homodimers, however it is likely to function as a monomer. Interacts with NFKB1. Interacts (via N-terminus) with JUN and FOS; these interactions inhibit the binding of active AP1 to its target DNA. As to quaternary structure, interacts with MYOD1. Interacts with HDAC1; this interaction affects HDAC1 activity on MYOG promoter and thus inhibits MYOD1 transcriptional activity. In terms of assembly, interacts with MYOD1. As to expression, expressed in T-cells. Expression inversely correlates with T-cell activation, being higher in resting cells and lower in cells activated by TCR/CD3 triggering (at protein level). Constitutively expressed in lung, intestine, kidney and liver, most probably by resident cells from the macrophage lineage. Expressed in thymus, lymph nodes, bone marrow, spleen, lung and skeletal muscle. Expressed in spleen and skeletal muscle (at protein level). Expressed in the cortex, medulla and papilla of the kidney. In terms of tissue distribution, expressed in the cortex, medulla and papilla of the kidney. As to expression, expressed in spleen and skeletal muscle (at protein level).

It localises to the cytoplasm. It is found in the nucleus. Protects T-cells from IL2 deprivation-induced apoptosis through the inhibition of FOXO3A transcriptional activity that leads to the down-regulation of the pro-apoptotic factor BCL2L11. In macrophages, plays a role in the anti-inflammatory and immunosuppressive effects of glucocorticoids and IL10. In T-cells, inhibits anti-CD3-induced NFKB1 nuclear translocation and thereby NFKB1 DNA-binding activities. In vitro, suppresses AP-1 transcription factor complex DNA-binding activities. In terms of biological role, inhibits myogenic differentiation and mediates anti-myogenic effects of glucocorticoids by binding and regulating MYOD1 and HDAC1 transcriptional activity resulting in reduced expression of MYOG. This Mus musculus (Mouse) protein is TSC22 domain family protein 3.